Here is a 172-residue protein sequence, read N- to C-terminus: Crossover junction endodeoxyribonuclease RuvC (172 aa).

Catalysis depends on residues Asp-12, Glu-71, and Asp-143. 3 residues coordinate Mg(2+): Asp-12, Glu-71, and Asp-143.

This sequence belongs to the RuvC family. Homodimer which binds Holliday junction (HJ) DNA. The HJ becomes 2-fold symmetrical on binding to RuvC with unstacked arms; it has a different conformation from HJ DNA in complex with RuvA. In the full resolvosome a probable DNA-RuvA(4)-RuvB(12)-RuvC(2) complex forms which resolves the HJ. Requires Mg(2+) as cofactor.

It is found in the cytoplasm. The enzyme catalyses Endonucleolytic cleavage at a junction such as a reciprocal single-stranded crossover between two homologous DNA duplexes (Holliday junction).. The RuvA-RuvB-RuvC complex processes Holliday junction (HJ) DNA during genetic recombination and DNA repair. Endonuclease that resolves HJ intermediates. Cleaves cruciform DNA by making single-stranded nicks across the HJ at symmetrical positions within the homologous arms, yielding a 5'-phosphate and a 3'-hydroxyl group; requires a central core of homology in the junction. The consensus cleavage sequence is 5'-(A/T)TT(C/G)-3'. Cleavage occurs on the 3'-side of the TT dinucleotide at the point of strand exchange. HJ branch migration catalyzed by RuvA-RuvB allows RuvC to scan DNA until it finds its consensus sequence, where it cleaves and resolves the cruciform DNA. This is Crossover junction endodeoxyribonuclease RuvC from Coxiella burnetii (strain CbuK_Q154) (Coxiella burnetii (strain Q154)).